The sequence spans 287 residues: ATP synthase gamma chain (287 aa).

The protein belongs to the ATPase gamma chain family. In terms of assembly, F-type ATPases have 2 components, CF(1) - the catalytic core - and CF(0) - the membrane proton channel. CF(1) has five subunits: alpha(3), beta(3), gamma(1), delta(1), epsilon(1). CF(0) has three main subunits: a, b and c.

The protein resides in the cell inner membrane. In terms of biological role, produces ATP from ADP in the presence of a proton gradient across the membrane. The gamma chain is believed to be important in regulating ATPase activity and the flow of protons through the CF(0) complex. The chain is ATP synthase gamma chain from Marinobacter nauticus (strain ATCC 700491 / DSM 11845 / VT8) (Marinobacter aquaeolei).